We begin with the raw amino-acid sequence, 37 residues long: Large ribosomal subunit protein bL36c (37 aa).

It belongs to the bacterial ribosomal protein bL36 family.

It localises to the plastid. The protein resides in the chloroplast. The protein is Large ribosomal subunit protein bL36c of Gnetum parvifolium (Small-leaved jointfir).